The sequence spans 156 residues: S-ribosylhomocysteine lyase (156 aa).

Residues H56, H60, and C123 each coordinate Fe cation.

The protein belongs to the LuxS family. Homodimer. The cofactor is Fe cation.

It carries out the reaction S-(5-deoxy-D-ribos-5-yl)-L-homocysteine = (S)-4,5-dihydroxypentane-2,3-dione + L-homocysteine. In terms of biological role, involved in the synthesis of autoinducer 2 (AI-2) which is secreted by bacteria and is used to communicate both the cell density and the metabolic potential of the environment. The regulation of gene expression in response to changes in cell density is called quorum sensing. Catalyzes the transformation of S-ribosylhomocysteine (RHC) to homocysteine (HC) and 4,5-dihydroxy-2,3-pentadione (DPD). The sequence is that of S-ribosylhomocysteine lyase from Staphylococcus saprophyticus subsp. saprophyticus (strain ATCC 15305 / DSM 20229 / NCIMB 8711 / NCTC 7292 / S-41).